We begin with the raw amino-acid sequence, 60 residues long: Alpha-conotoxin-like 289 (60 aa).

The first 16 residues, 1–16 (MFTVFLLVVLATTVVS), serve as a signal peptide directing secretion. Positions 17 to 42 (FTSDRAFRGRNAAAKASGLVGLTDKR) are excised as a propeptide. Gln43 is modified (pyrrolidone carboxylic acid). 2 disulfide bridges follow: Cys45–Cys51 and Cys46–Cys59. The ser-Xaa-Pro motif, crucial for potent interaction with nAChR stretch occupies residues 47–49 (SYP). Cys59 carries the cysteine amide modification.

This sequence belongs to the conotoxin A superfamily. In terms of tissue distribution, expressed by the venom duct.

The protein localises to the secreted. In terms of biological role, alpha-conotoxins act on postsynaptic membranes, they bind to the nicotinic acetylcholine receptors (nAChR) and thus inhibit them. The protein is Alpha-conotoxin-like 289 of Conus ammiralis (Admiral cone).